An 87-amino-acid polypeptide reads, in one-letter code: Cell division topological specificity factor (87 aa).

This sequence belongs to the MinE family.

Its function is as follows. Prevents the cell division inhibition by proteins MinC and MinD at internal division sites while permitting inhibition at polar sites. This ensures cell division at the proper site by restricting the formation of a division septum at the midpoint of the long axis of the cell. This is Cell division topological specificity factor from Vibrio vulnificus (strain CMCP6).